The following is a 376-amino-acid chain: tRNA-specific 2-thiouridylase MnmA (376 aa).

ATP-binding positions include 10-17 (GMSGGVDS) and methionine 36. The segment at 96-98 (NPD) is interaction with target base in tRNA. Cysteine 101 serves as the catalytic Nucleophile. A disulfide bridge connects residues cysteine 101 and cysteine 198. Residue glycine 125 participates in ATP binding. The tract at residues 148–150 (KDQ) is interaction with tRNA. Cysteine 198 functions as the Cysteine persulfide intermediate in the catalytic mechanism. The segment at 305–306 (RY) is interaction with tRNA.

The protein belongs to the MnmA/TRMU family.

It localises to the cytoplasm. The catalysed reaction is S-sulfanyl-L-cysteinyl-[protein] + uridine(34) in tRNA + AH2 + ATP = 2-thiouridine(34) in tRNA + L-cysteinyl-[protein] + A + AMP + diphosphate + H(+). In terms of biological role, catalyzes the 2-thiolation of uridine at the wobble position (U34) of tRNA, leading to the formation of s(2)U34. The chain is tRNA-specific 2-thiouridylase MnmA from Protochlamydia amoebophila (strain UWE25).